Reading from the N-terminus, the 331-residue chain is L-lactate dehydrogenase A chain (331 aa).

Residues 29 to 57 (GMVG…MEDK) and Arg-98 each bind NAD(+). Residues Arg-105, Asn-137, and Arg-168 each coordinate substrate. Asn-137 is an NAD(+) binding site. Catalysis depends on His-192, which acts as the Proton acceptor. Thr-247 is a binding site for substrate.

This sequence belongs to the LDH/MDH superfamily. LDH family. Homotetramer.

It localises to the cytoplasm. It carries out the reaction (S)-lactate + NAD(+) = pyruvate + NADH + H(+). The protein operates within fermentation; pyruvate fermentation to lactate; (S)-lactate from pyruvate: step 1/1. Its function is as follows. Interconverts simultaneously and stereospecifically pyruvate and lactate with concomitant interconversion of NADH and NAD(+). This chain is L-lactate dehydrogenase A chain (ldha), found in Harpagifer antarcticus (Antarctic spiny plunderfish).